The following is a 244-amino-acid chain: tRNA pseudouridine synthase C (244 aa).

Residue Asp-54 is part of the active site.

The protein belongs to the pseudouridine synthase RluA family.

It catalyses the reaction uridine(65) in tRNA = pseudouridine(65) in tRNA. Responsible for synthesis of pseudouridine from uracil-65 in transfer RNAs. In Vibrio cholerae serotype O1 (strain ATCC 39315 / El Tor Inaba N16961), this protein is tRNA pseudouridine synthase C (truC).